The following is a 467-amino-acid chain: Phosphoglucosamine mutase (467 aa).

Ser-120 serves as the catalytic Phosphoserine intermediate. Residues Ser-120, Asp-261, Asp-263, and Asp-265 each contribute to the Mg(2+) site. Residue Ser-120 is modified to Phosphoserine.

This sequence belongs to the phosphohexose mutase family. The cofactor is Mg(2+). Post-translationally, activated by phosphorylation.

It carries out the reaction alpha-D-glucosamine 1-phosphate = D-glucosamine 6-phosphate. Catalyzes the conversion of glucosamine-6-phosphate to glucosamine-1-phosphate. The chain is Phosphoglucosamine mutase from Parafrankia sp. (strain EAN1pec).